Consider the following 76-residue polypeptide: Acyl carrier protein (76 aa).

Positions 1–75 (MIFEKIKDLI…DIVFYITKNT (75 aa)) constitute a Carrier domain. Ser35 is subject to O-(pantetheine 4'-phosphoryl)serine.

It belongs to the acyl carrier protein (ACP) family. In terms of processing, 4'-phosphopantetheine is transferred from CoA to a specific serine of apo-ACP by AcpS. This modification is essential for activity because fatty acids are bound in thioester linkage to the sulfhydryl of the prosthetic group.

It localises to the cytoplasm. The protein operates within lipid metabolism; fatty acid biosynthesis. In terms of biological role, carrier of the growing fatty acid chain in fatty acid biosynthesis. In Aster yellows witches'-broom phytoplasma (strain AYWB), this protein is Acyl carrier protein.